We begin with the raw amino-acid sequence, 228 residues long: Cytidylate kinase (228 aa).

17-25 contributes to the ATP binding site; the sequence is GPTASGKGT.

This sequence belongs to the cytidylate kinase family. Type 1 subfamily.

It localises to the cytoplasm. The catalysed reaction is CMP + ATP = CDP + ADP. The enzyme catalyses dCMP + ATP = dCDP + ADP. The polypeptide is Cytidylate kinase (Burkholderia vietnamiensis (strain G4 / LMG 22486) (Burkholderia cepacia (strain R1808))).